We begin with the raw amino-acid sequence, 145 residues long: Probable inactive ribonuclease-like protein 12 (145 aa).

An N-terminal signal peptide occupies residues 1–19 (MILMVIVFLLLLFWENELT). N88 carries an N-linked (GlcNAc...) asparagine glycan.

The protein belongs to the pancreatic ribonuclease family.

The protein resides in the secreted. In terms of biological role, does not exhibit any ribonuclease activity. This chain is Probable inactive ribonuclease-like protein 12 (Rnase12), found in Rattus norvegicus (Rat).